We begin with the raw amino-acid sequence, 463 residues long: Cysteine--tRNA ligase (463 aa).

Residue C29 coordinates Zn(2+). The 'HIGH' region signature appears at 31-41; sequence PTVYDFAHIGN. Residues C227, H252, and E256 each contribute to the Zn(2+) site. The short motif at 285-289 is the 'KMSKS' region element; the sequence is KMSKS. Residue K288 coordinates ATP.

Belongs to the class-I aminoacyl-tRNA synthetase family. As to quaternary structure, monomer. It depends on Zn(2+) as a cofactor.

It is found in the cytoplasm. The catalysed reaction is tRNA(Cys) + L-cysteine + ATP = L-cysteinyl-tRNA(Cys) + AMP + diphosphate. In Rhodopseudomonas palustris (strain BisB5), this protein is Cysteine--tRNA ligase.